Consider the following 682-residue polypeptide: Cyclic nucleotide-gated cation channel (682 aa).

A disordered region spans residues 1–41 (MTGQAALERSVSSHRLSVRSRLEGEAERAESAISRTDGDDD). The Cytoplasmic portion of the chain corresponds to 1–136 (MTGQAALERS…EGFVVSQSDD (136 aa)). Basic and acidic residues predominate over residues 20–30 (SRLEGEAERAE). A helical transmembrane segment spans residues 137–157 (IYYYWLFFIALASLYNWIMLV). Over 158–169 (ARACFDQLQDEN) the chain is Extracellular. A helical membrane pass occupies residues 170 to 190 (FFLWVGLDYLCDVIYILDTCI). At 191 to 218 (RLRTGYLEQGLLVKDLAKLRDNYIRTLQ) the chain is on the cytoplasmic side. Residues 219–239 (FKLDFLSILPTELLFFVTGYV) traverse the membrane as a helical segment. Topologically, residues 240-272 (PQLRFNRLLRFSRMFEFFDRTETRTNYPNAFRI) are extracellular. The chain crosses the membrane as a helical span at residues 273 to 293 (CNLILYILVIIHWNACIYYAI). The Cytoplasmic segment spans residues 294 to 311 (SKALGLSSDTWVYSGQNK). A helical transmembrane segment spans residues 312–332 (TLSFCYVYCFYWSTLTLTTIG). Residues 333–343 (EMPPPVKDEEY) are Extracellular-facing. A helical membrane pass occupies residues 344–364 (VFVVFDFLVGVLIFATIVGNV). Residues 365–682 (GSMIANMNAT…SAETNSEEET (318 aa)) are Cytoplasmic-facing. Residues 455–577 (LLVE…QGLL), glutamate 514, and arginine 529 each bind 3',5'-cyclic AMP. Positions 649 to 682 (GEHAGVPTHTHADIHAQPETHTRTSAETNSEEET) are disordered. A compositionally biased stretch (basic and acidic residues) spans 658–672 (THADIHAQPETHTRT).

This sequence belongs to the cyclic nucleotide-gated cation channel (TC 1.A.1.5) family. As to expression, olfactory neurons.

Its subcellular location is the membrane. In terms of biological role, this cyclic nucleotide-gated channel is activated equally well by both cAMP and cGMP. The polypeptide is Cyclic nucleotide-gated cation channel (Ictalurus punctatus (Channel catfish)).